The primary structure comprises 129 residues: Small ribosomal subunit protein uS11 (129 aa).

Belongs to the universal ribosomal protein uS11 family. In terms of assembly, part of the 30S ribosomal subunit. Interacts with proteins S7 and S18. Binds to IF-3.

Its function is as follows. Located on the platform of the 30S subunit, it bridges several disparate RNA helices of the 16S rRNA. Forms part of the Shine-Dalgarno cleft in the 70S ribosome. The chain is Small ribosomal subunit protein uS11 from Actinobacillus succinogenes (strain ATCC 55618 / DSM 22257 / CCUG 43843 / 130Z).